Here is a 118-residue protein sequence, read N- to C-terminus: Large ribosomal subunit protein bL20 (118 aa).

It belongs to the bacterial ribosomal protein bL20 family.

In terms of biological role, binds directly to 23S ribosomal RNA and is necessary for the in vitro assembly process of the 50S ribosomal subunit. It is not involved in the protein synthesizing functions of that subunit. The sequence is that of Large ribosomal subunit protein bL20 from Tolumonas auensis (strain DSM 9187 / NBRC 110442 / TA 4).